We begin with the raw amino-acid sequence, 97 residues long: Large ribosomal subunit protein bL27 (97 aa).

Positions 1–9 are excised as a propeptide; it reads MFTFDLQLF.

The protein belongs to the bacterial ribosomal protein bL27 family. In terms of processing, the N-terminus is cleaved by ribosomal processing cysteine protease Prp.

The polypeptide is Large ribosomal subunit protein bL27 (Syntrophomonas wolfei subsp. wolfei (strain DSM 2245B / Goettingen)).